A 482-amino-acid chain; its full sequence is MKVLPASGLAVLVTALKFATADPNLLAATPRTFRSNYHLAQAYLDKYYTKKGGPQAGEMVARESNPMIRRIKELQIFFGLKVTGKLDQNTMNVIKKPRCGVPDVANYRLFPGEPKWKKNILTYRISKYTPSMSPTEVDKAIQMALHAWSTAVPLNFVRINSGEADIMISFETGDHGDSYPFDGPRGTLAHAFAPGEGLGGDTHFDNAEKWTMGTNGFNLFTVAAHEFGHALGLGHSTDPSALMYPTYKYQNPYRFHLPKDDVKGIQALYGPRKIFPGKPTMPHIPPHKPSIPDLCDSSSSFDAVTMLGKELLFFKDRIFWRRQVHLPTGIRPSTITSSFPQLMSNVDAAYEVAERGIAFFFKGPHYWVTRGFHMQGPPRTIYDFGFPRHVQRIDAAVYLKEPQKTLFFVGEEYYSYDERKKKMEKDYPKNTEEEFSGVSGHIDAAVELNGYIYFFSGRKTFKYDTEKEDVVSVVKSSSWIGC.

A signal peptide spans 1-21 (MKVLPASGLAVLVTALKFATA). Positions 22–106 (DPNLLAATPR…PRCGVPDVAN (85 aa)) are excised as a propeptide. The Cysteine switch signature appears at 97–104 (PRCGVPDV). Cys-99 contacts Zn(2+). Ca(2+) is bound by residues Glu-163, Ala-164, and Asp-165. Residues His-175 and Asp-177 each contribute to the Zn(2+) site. Ca(2+)-binding residues include Asp-182, Gly-183, Arg-185, and Thr-187. Zn(2+) is bound at residue His-190. Residues Glu-196, Gly-197, Gly-199, and Asp-201 each contribute to the Ca(2+) site. A Zn(2+)-binding site is contributed by His-203. Ca(2+)-binding residues include Asp-205 and Glu-208. Residue His-225 coordinates Zn(2+). Residue Glu-226 is part of the active site. Positions 229 and 235 each coordinate Zn(2+). Hemopexin repeat units lie at residues 292-342 (PDLC…FPQL), 343-388 (MSNV…GFPR), 390-438 (VQRI…FSGV), and 439-482 (SGHI…WIGC). An intrachain disulfide couples Cys-295 to Cys-482.

It belongs to the peptidase M10A family. Requires Zn(2+) as cofactor. The cofactor is Ca(2+). Post-translationally, autoactivates at least at the 106-Asn-|-Tyr-107 site. Expressed in the enamel organ.

It localises to the secreted. Its subcellular location is the extracellular space. The protein localises to the extracellular matrix. Its function is as follows. Degrades amelogenin, the major protein component of the enamel matrix and two of the macromolecules characterizing the cartilage extracellular matrix: aggrecan and the cartilage oligomeric matrix protein (COMP). May play a central role in tooth enamel formation. Cleaves aggrecan at the '360-Asn-|-Phe-361' site. This chain is Matrix metalloproteinase-20 (Mmp20), found in Mus musculus (Mouse).